A 353-amino-acid polypeptide reads, in one-letter code: MKFLDEAKVYIRSGDGGNGCVAFRREKFIEFGGPNGGNGGRGGDVVVEAADGLNTLIDYRYQQHFKAQKGVNGMGSDRHGANGKAIVLKVPVGTQIFDEDKETLIHDFTTVGERFVLAEGGNGGFGNAHFKSSTNRAPRHANPGLPGEERWIWLRLKLIADAGLVGLPNAGKSTFLSKVSAAKPKIADYPFTTLHPQLGVVNADGREFVLADIPGLIEGAHEGAGLGDRFLGHVERCRVLLHLIDATCEHAGKAYKTVRGELEAYAETLADKIEIVALNKIDAVEPDELKKQKDRLKRAAKKTPLLISGITGQGVPEALRALAAVIGEAPVSDKAKGAADNAANAEPWAPQDA.

The Obg domain maps to 1–159 (MKFLDEAKVY…RWIWLRLKLI (159 aa)). The OBG-type G domain maps to 160 to 327 (ADAGLVGLPN…ALRALAAVIG (168 aa)). GTP contacts are provided by residues 166-173 (GLPNAGKS), 191-195 (FTTLH), 212-215 (DIPG), 279-282 (NKID), and 308-310 (SGI). Residues serine 173 and threonine 193 each coordinate Mg(2+). The segment at 332–353 (SDKAKGAADNAANAEPWAPQDA) is disordered.

It belongs to the TRAFAC class OBG-HflX-like GTPase superfamily. OBG GTPase family. In terms of assembly, monomer. Requires Mg(2+) as cofactor.

The protein localises to the cytoplasm. Functionally, an essential GTPase which binds GTP, GDP and possibly (p)ppGpp with moderate affinity, with high nucleotide exchange rates and a fairly low GTP hydrolysis rate. Plays a role in control of the cell cycle, stress response, ribosome biogenesis and in those bacteria that undergo differentiation, in morphogenesis control. This Rhodopseudomonas palustris (strain HaA2) protein is GTPase Obg.